Reading from the N-terminus, the 321-residue chain is HPr kinase/phosphorylase (321 aa).

Catalysis depends on residues His143 and Lys164. Residue Gly158–Ser165 participates in ATP binding. Ser165 is a Mg(2+) binding site. Asp182 functions as the Proton acceptor; for phosphorylation activity. Proton donor; for dephosphorylation activity in the catalytic mechanism. Positions Met206 to Asn215 are important for the catalytic mechanism of both phosphorylation and dephosphorylation. Position 207 (Glu207) interacts with Mg(2+). Arg248 is a catalytic residue. The tract at residues Pro269–Arg274 is important for the catalytic mechanism of dephosphorylation.

It belongs to the HPrK/P family. In terms of assembly, homohexamer. Mg(2+) serves as cofactor.

It carries out the reaction [HPr protein]-L-serine + ATP = [HPr protein]-O-phospho-L-serine + ADP + H(+). The enzyme catalyses [HPr protein]-O-phospho-L-serine + phosphate + H(+) = [HPr protein]-L-serine + diphosphate. Catalyzes the ATP- as well as the pyrophosphate-dependent phosphorylation of a specific serine residue in HPr, a phosphocarrier protein of the phosphoenolpyruvate-dependent sugar phosphotransferase system (PTS). HprK/P also catalyzes the pyrophosphate-producing, inorganic phosphate-dependent dephosphorylation (phosphorolysis) of seryl-phosphorylated HPr (P-Ser-HPr). This is HPr kinase/phosphorylase from Leptospira interrogans serogroup Icterohaemorrhagiae serovar copenhageni (strain Fiocruz L1-130).